A 317-amino-acid polypeptide reads, in one-letter code: Olfactory receptor 5K16 (317 aa).

Over Met1–Phe28 the chain is Extracellular. N-linked (GlcNAc...) asparagine glycosylation occurs at Asn5. The chain crosses the membrane as a helical span at residues Leu29 to Ile49. Residues Tyr50–His56 are Cytoplasmic-facing. A helical membrane pass occupies residues Thr57–Ile77. Over Thr78–Ser93 the chain is Extracellular. A helical transmembrane segment spans residues Leu94–Leu114. Cysteines 97 and 189 form a disulfide. Residues Leu115–Met144 are Cytoplasmic-facing. A helical membrane pass occupies residues Ser145 to Arg165. At Leu166 to Met198 the chain is on the extracellular side. A helical transmembrane segment spans residues Ile199 to Phe219. Topologically, residues Cys220 to Ser239 are cytoplasmic. A helical transmembrane segment spans residues Thr240–Ile259. The Extracellular portion of the chain corresponds to Arg260–Asp268. Residues Ile269–Leu289 traverse the membrane as a helical segment. The Cytoplasmic segment spans residues Arg290–Arg317.

This sequence belongs to the G-protein coupled receptor 1 family.

The protein localises to the cell membrane. Functionally, potential odorant receptor. The chain is Olfactory receptor 5K16 from Mus musculus (Mouse).